The primary structure comprises 468 residues: Mitochondrial distribution and morphology protein 10 (468 aa).

Over residues 370 to 386 the composition is skewed to basic and acidic residues; the sequence is ERDGLPGIQRDDHDMHH. The disordered stretch occupies residues 370-394; that stretch reads ERDGLPGIQRDDHDMHHHPQRPHAS.

It belongs to the MDM10 family. In terms of assembly, component of the ER-mitochondria encounter structure (ERMES) or MDM complex, composed of MMM1, MDM10, MDM12 and MDM34. Associates with the mitochondrial outer membrane sorting assembly machinery SAM(core) complex.

It localises to the mitochondrion outer membrane. Component of the ERMES/MDM complex, which serves as a molecular tether to connect the endoplasmic reticulum and mitochondria. Components of this complex are involved in the control of mitochondrial shape and protein biogenesis and may function in phospholipid exchange. MDM10 is involved in the late assembly steps of the general translocase of the mitochondrial outer membrane (TOM complex). Functions in the TOM40-specific route of the assembly of outer membrane beta-barrel proteins, including the association of TOM40 with the receptor TOM22 and small TOM proteins. Can associate with the SAM(core) complex as well as the MDM12-MMM1 complex, both involved in late steps of the major beta-barrel assembly pathway, that is responsible for biogenesis of all outer membrane beta-barrel proteins. May act as a switch that shuttles between both complexes and channels precursor proteins into the TOM40-specific pathway. Plays a role in mitochondrial morphology and in the inheritance of mitochondria. This Ajellomyces dermatitidis (strain ER-3 / ATCC MYA-2586) (Blastomyces dermatitidis) protein is Mitochondrial distribution and morphology protein 10.